The following is a 105-amino-acid chain: Replication restart protein PriB (105 aa).

Positions 1 to 102 (MTTNRLVLSG…LHAEQIELID (102 aa)) constitute an SSB domain.

It belongs to the PriB family. In terms of assembly, homodimer. Interacts with PriA and DnaT. Component of the replication restart primosome. Primosome assembly occurs via a 'hand-off' mechanism. PriA binds to replication forks, subsequently PriB then DnaT bind; DnaT then displaces ssDNA to generate the helicase loading substrate.

Its function is as follows. Involved in the restart of stalled replication forks, which reloads the replicative helicase on sites other than the origin of replication; the PriA-PriB pathway is the major replication restart pathway. During primosome assembly it facilitates complex formation between PriA and DnaT on DNA; stabilizes PriA on DNA. Stimulates the DNA unwinding activity of PriA helicase. The protein is Replication restart protein PriB of Photorhabdus laumondii subsp. laumondii (strain DSM 15139 / CIP 105565 / TT01) (Photorhabdus luminescens subsp. laumondii).